A 373-amino-acid chain; its full sequence is tRNA-specific 2-thiouridylase MnmA (373 aa).

ATP-binding positions include 12-19 and Met-38; that span reads GMSGGVDS. The interaction with target base in tRNA stretch occupies residues 98–100; that stretch reads NPD. The Nucleophile role is filled by Cys-103. Cys-103 and Cys-200 form a disulfide bridge. Gly-127 contacts ATP. The interval 150 to 152 is interaction with tRNA; it reads KDQ. Cys-200 serves as the catalytic Cysteine persulfide intermediate. Residues 312–313 form an interaction with tRNA region; it reads RY.

It belongs to the MnmA/TRMU family.

The protein localises to the cytoplasm. The enzyme catalyses S-sulfanyl-L-cysteinyl-[protein] + uridine(34) in tRNA + AH2 + ATP = 2-thiouridine(34) in tRNA + L-cysteinyl-[protein] + A + AMP + diphosphate + H(+). In terms of biological role, catalyzes the 2-thiolation of uridine at the wobble position (U34) of tRNA, leading to the formation of s(2)U34. This chain is tRNA-specific 2-thiouridylase MnmA, found in Streptococcus pneumoniae serotype 19F (strain G54).